Here is a 231-residue protein sequence, read N- to C-terminus: NADH-ubiquinone oxidoreductase chain 4 (231 aa).

A run of 7 helical transmembrane segments spans residues P1–I21, M34–L54, I63–G85, A89–Y111, I128–P148, T169–L189, and L211–I231.

Belongs to the complex I subunit 4 family.

Its subcellular location is the mitochondrion membrane. It carries out the reaction a ubiquinone + NADH + 5 H(+)(in) = a ubiquinol + NAD(+) + 4 H(+)(out). Its function is as follows. Core subunit of the mitochondrial membrane respiratory chain NADH dehydrogenase (Complex I) that is believed to belong to the minimal assembly required for catalysis. Complex I functions in the transfer of electrons from NADH to the respiratory chain. The immediate electron acceptor for the enzyme is believed to be ubiquinone. The polypeptide is NADH-ubiquinone oxidoreductase chain 4 (MT-ND4) (Cerrophidion godmani (Porthidium godmani)).